The following is a 334-amino-acid chain: tRNA N6-adenosine threonylcarbamoyltransferase (334 aa).

Fe cation is bound by residues His-107 and His-111. Substrate-binding positions include Leu-129 to Gly-133, Asp-162, Gly-175, and Asn-269. A Fe cation-binding site is contributed by Asp-297.

It belongs to the KAE1 / TsaD family. Requires Fe(2+) as cofactor.

The protein localises to the cytoplasm. The enzyme catalyses L-threonylcarbamoyladenylate + adenosine(37) in tRNA = N(6)-L-threonylcarbamoyladenosine(37) in tRNA + AMP + H(+). Required for the formation of a threonylcarbamoyl group on adenosine at position 37 (t(6)A37) in tRNAs that read codons beginning with adenine. Is involved in the transfer of the threonylcarbamoyl moiety of threonylcarbamoyl-AMP (TC-AMP) to the N6 group of A37, together with TsaE and TsaB. TsaD likely plays a direct catalytic role in this reaction. The sequence is that of tRNA N6-adenosine threonylcarbamoyltransferase from Campylobacter concisus (strain 13826).